The sequence spans 1515 residues: MARLAAALWSLCVTTVLVTSATQGLSRAGLPFGLMRRELACEGYPIELRCPGSDVIMVENANYGRTDDKICDADPFQMENVQCYLPDAFKIMSQRCNNRTQCVVVAGSDAFPDPCPGTYKYLEVQYDCVPYKVEQKVFVCPGTLQKVLEPTSTHESEHQSGAWCKDPLQAGDRIYVMPWIPYRTDTLTEYASWEDYVAARHTTTYRLPNRVDGTGFVVYDGAVFYNKERTRNIVKYDLRTRIKSGETVINTANYHDTSPYRWGGKTDIDLAVDENGLWVIYATEGNNGRLVVSQLNPYTLRFEGTWETGYDKRSASNAFMVCGVLYVLRSVYVDDDSEAAGNRVDYAFNTNANREEPVSLAFPNPYQFVSSVDYNPRDNQLYVWNNYFVVRYSLEFGPPDPSAGPATSPPLSTTTTARPTPLTSTASPAATTPLRRAPLTTHPVGAINQLGPDLPPATAPAPSTRRPPAPNLHVSPELFCEPREVRRVQWPATQQGMLVERPCPKGTRGIASFQCLPALGLWNPRGPDLSNCTSPWVNQVAQKIKSGENAANIASELARHTRGSIYAGDVSSSVKLMEQLLDILDAQLQALRPIERESAGKNYNKMHKRERTCKDYIKAVVETVDNLLRPEALESWKDMNATEQVHTATMLLDVLEEGAFLLADNVREPARFLAAKQNVVLEVTVLSTEGQVQELVFPQEYASESSIQLSANTIKQNSRNGVVKVVFILYNNLGLFLSTENATVKLAGEAGTGGPGGASLVVNSQVIAASINKESSRVFLMDPVIFTVAHLEAKNHFNANCSFWNYSERSMLGYWSTQGCRLVESNKTHTTCACSHLTNFAVLMAHREIYQGRINELLLSVITWVGIVISLVCLAICISTFCFLRGLQTDRNTIHKNLCINLFLAELLFLVGIDKTQYEVACPIFAGLLHYFFLAAFSWLCLEGVHLYLLLVEVFESEYSRTKYYYLGGYCFPALVVGIAAAIDYRSYGTEKACWLRVDNYFIWSFIGPVSFVIVVNLVFLMVTLHKMIRSSSVLKPDSSRLDNIKSWALGAIALLFLLGLTWAFGLLFINKESVVMAYLFTTFNAFQGVFIFVFHCALQKKVHKEYSKCLRHSYCCIRSPPGGAHGSLKTSAMRSNTRYYTGTQVPGQGRHIHQVSLGPRGRSALPESQKDPGGQSGPGDPLTFGLCPSRIRRMWNDTVRKQTESSFMAGDINSTPTLNRGTMGNHLLTNPVLQPRGGTSPYNTLIAESVGFNPSSPPVFNSPGSYREPKHPLGGREACGMDTLPLNGNFNNSYSLRSGDFPPGDGGPEPPRGRNLADAAAFEKMIISELVHNNLRGASGGAKGPPPEPPVPPVPGVSEDEAGGPGGADRAEIELLYKALEEPLLLPRAQSVLYQSDLDESESCTAEDGATSRPLSSPPGRDSLYASGANLRDSPSYPDSSPEGPNEALPPPPPAPPGPPEIYYTSRPPALVARNPLQGYYQVRRPSHEGYLAAPSLEGPGPDGDGQMQLVTSL.

Residues 1 to 24 form the signal peptide; it reads MARLAAALWSLCVTTVLVTSATQG. Residues 25–857 lie on the Extracellular side of the membrane; the sequence is LSRAGLPFGL…EIYQGRINEL (833 aa). The 90-residue stretch at 40–129 folds into the SUEL-type lectin domain; it reads ACEGYPIELR…KYLEVQYDCV (90 aa). 5 cysteine pairs are disulfide-bonded: Cys41/Cys71, Cys50/Cys128, Cys83/Cys115, Cys96/Cys102, and Cys140/Cys322. Alpha-L-rhamnose is bound at residue Glu42. An N-linked (GlcNAc...) asparagine glycan is attached at Asn98. 117-120 contributes to the alpha-L-rhamnose binding site; that stretch reads GTYK. One can recognise an Olfactomedin-like domain in the interval 139-398; that stretch reads VCPGTLQKVL…VVRYSLEFGP (260 aa). A disordered region spans residues 400–468; sequence DPSAGPATSP…APAPSTRRPP (69 aa). Low complexity predominate over residues 405 to 441; sequence PATSPPLSTTTTARPTPLTSTASPAATTPLRRAPLTT. Positions 453–468 are enriched in pro residues; sequence DLPPATAPAPSTRRPP. Intrachain disulfides connect Cys480/Cys515 and Cys503/Cys532. N-linked (GlcNAc...) asparagine glycosylation is found at Asn531, Asn640, Asn741, Asn800, Asn805, and Asn826. A GAIN-B domain is found at 669-850; that stretch reads PARFLAAKQN…AVLMAHREIY (182 aa). 2 cysteine pairs are disulfide-bonded: Cys801/Cys832 and Cys820/Cys834. The interval 801–850 is GPS; sequence CSFWNYSERSMLGYWSTQGCRLVESNKTHTTCACSHLTNFAVLMAHREIY. The chain crosses the membrane as a helical span at residues 858 to 878; that stretch reads LLSVITWVGIVISLVCLAICI. The Cytoplasmic segment spans residues 879–892; sequence STFCFLRGLQTDRN. The helical transmembrane segment at 893 to 913 threads the bilayer; sequence TIHKNLCINLFLAELLFLVGI. Over 914 to 919 the chain is Extracellular; it reads DKTQYE. Residues 920 to 940 traverse the membrane as a helical segment; the sequence is VACPIFAGLLHYFFLAAFSWL. Topologically, residues 941–964 are cytoplasmic; it reads CLEGVHLYLLLVEVFESEYSRTKY. A helical membrane pass occupies residues 965–985; the sequence is YYLGGYCFPALVVGIAAAIDY. At 986–1001 the chain is on the extracellular side; sequence RSYGTEKACWLRVDNY. A helical transmembrane segment spans residues 1002–1022; it reads FIWSFIGPVSFVIVVNLVFLM. Residues 1023–1049 are Cytoplasmic-facing; sequence VTLHKMIRSSSVLKPDSSRLDNIKSWA. A helical transmembrane segment spans residues 1050–1070; the sequence is LGAIALLFLLGLTWAFGLLFI. Residues 1071–1074 lie on the Extracellular side of the membrane; that stretch reads NKES. The helical transmembrane segment at 1075-1095 threads the bilayer; that stretch reads VVMAYLFTTFNAFQGVFIFVF. Over 1096-1515 the chain is Cytoplasmic; that stretch reads HCALQKKVHK…DGQMQLVTSL (420 aa). The interval 1144 to 1184 is disordered; the sequence is TQVPGQGRHIHQVSLGPRGRSALPESQKDPGGQSGPGDPLT. The residue at position 1237 (Arg1237) is an Omega-N-methylarginine. Residue Ser1263 is modified to Phosphoserine. Disordered stretches follow at residues 1291-1316, 1337-1369, 1401-1470, and 1492-1515; these read FNNSYSLRSGDFPPGDGGPEPPRGRN, RGASGGAKGPPPEPPVPPVPGVSEDEAGGPGGA, ESES…SRPP, and YLAAPSLEGPGPDGDGQMQLVTSL. Composition is skewed to pro residues over residues 1345 to 1356 and 1449 to 1461; these read GPPPEPPVPPVP and ALPPPPPAPPGPP. Phosphoserine is present on residues Ser1497 and Ser1514.

It belongs to the G-protein coupled receptor 2 family. Adhesion G-protein coupled receptor (ADGR) subfamily. As to quaternary structure, forms a heterodimer, consisting of a large extracellular region (p120) non-covalently linked to a seven-transmembrane moiety (p85). Interacts with syntaxin and with proteins of the SHANK family via the PDZ domain. Isoform 2 interacts with TENM2. Interacts (via extracellular domain) with FLRT1, FLRT2 and FLRT3 (via extracellular domain). In terms of processing, autoproteolytically cleaved into 2 subunits, an extracellular subunit and a seven-transmembrane subunit. This proteolytic processing takes place early in the biosynthetic pathway, either in the endoplasmic reticulum or in the early compartment of the Golgi apparatus. In terms of tissue distribution, expressed in the brain (at protein level). Brain specific distribution but low levels are also detected in most tissues.

The protein resides in the cell membrane. The protein localises to the cell projection. Its subcellular location is the axon. It localises to the growth cone. It is found in the synapse. The protein resides in the presynaptic cell membrane. The protein localises to the synaptosome. Calcium-independent receptor of high affinity for alpha-latrotoxin, an excitatory neurotoxin present in black widow spider venom which triggers massive exocytosis from neurons and neuroendocrine cells. Receptor probably implicated in the regulation of exocytosis. In terms of biological role, receptor for TENM2 that mediates heterophilic synaptic cell-cell contact and postsynaptic specialization. The polypeptide is Adhesion G protein-coupled receptor L1 (Rattus norvegicus (Rat)).